A 243-amino-acid polypeptide reads, in one-letter code: MLPFWIALQFLSSLPVRLPGMPRPEELGRSLLFYPLVGLLFGVLLWVLNAMLGGVPLLLHAALLLTAWVLLSGGLHLDGLADSADAWLGGFGDRERTLSIMKDPRSGPIAVVTLVLVLLLKFTALVALIEQQQGFALLLAPLIGRGALLGLFLCTPYVRAGGLGQALADHLPRVAGRQVLGLSVLACLLLGGYSGLWAVLLATVLFFWLRQVMMRRLGGTTGDTAGAVLELLETAVLLGVALF.

5 consecutive transmembrane segments (helical) span residues 31 to 48 (LLFYPLVGLLFGVLLWVL), 61 to 81 (AALLLTAWVLLSGGLHLDGLA), 109 to 129 (IAVVTLVLVLLLKFTALVALI), 134 to 154 (GFALLLAPLIGRGALLGLFLC), and 188 to 208 (LLLGGYSGLWAVLLATVLFFW).

It belongs to the CobS family. The cofactor is Mg(2+).

Its subcellular location is the cell inner membrane. The catalysed reaction is alpha-ribazole + adenosylcob(III)inamide-GDP = adenosylcob(III)alamin + GMP + H(+). The enzyme catalyses alpha-ribazole 5'-phosphate + adenosylcob(III)inamide-GDP = adenosylcob(III)alamin 5'-phosphate + GMP + H(+). The protein operates within cofactor biosynthesis; adenosylcobalamin biosynthesis; adenosylcobalamin from cob(II)yrinate a,c-diamide: step 7/7. Joins adenosylcobinamide-GDP and alpha-ribazole to generate adenosylcobalamin (Ado-cobalamin). Also synthesizes adenosylcobalamin 5'-phosphate from adenosylcobinamide-GDP and alpha-ribazole 5'-phosphate. The chain is Adenosylcobinamide-GDP ribazoletransferase from Pseudomonas fluorescens (strain ATCC BAA-477 / NRRL B-23932 / Pf-5).